A 260-amino-acid chain; its full sequence is Fibronectin type III domain-containing protein 5 (260 aa).

The interval 1 to 56 is disordered; it reads MQAARGGAGRPERPGRPGRGPERERERPPGAGAASPCAAPGLPAGGATIHPGSPSA. Over residues 10 to 28 the composition is skewed to basic and acidic residues; that stretch reads RPERPGRPGRGPERERERP. The span at 29–56 shows a compositional bias: low complexity; sequence PGAGAASPCAAPGLPAGGATIHPGSPSA. Residues 84 to 175 enclose the Fibronectin type-III domain; sequence APVNVTVRHL…EPVLFKTPRE (92 aa). N-linked (GlcNAc...) asparagine glycans are attached at residues N87 and N132. Residues 201-221 traverse the membrane as a helical segment; it reads GEVLIIVVVLFMWAGVIALFC. Positions 230–241 are enriched in basic and acidic residues; the sequence is NEPNNNKEKTKS. Positions 230 to 260 are disordered; the sequence is NEPNNNKEKTKSASETSTPEHQGGGLLRSKI. Positions 251–260 are enriched in gly residues; that stretch reads QGGGLLRSKI. The Microbody targeting signal signature appears at 258 to 260; the sequence is SKI.

In terms of assembly, dimer; may exist in other oligomeric forms. Post-translationally, the extracellular domain is cleaved and released from the cell membrane. N-Glycosylated. As to expression, widely expressed, with highest levels in heart. Very low expression, if any, in colon, pancreas and spleen.

Its subcellular location is the cell membrane. It localises to the peroxisome membrane. The protein localises to the secreted. Its function is as follows. Mediates beneficial effects of muscular exercise. Induces browning of white adipose tissue by stimulating UCP1 expression, at least in part, via the nuclear receptor PPARA. This is Fibronectin type III domain-containing protein 5 (FNDC5) from Homo sapiens (Human).